The following is a 147-amino-acid chain: Transcriptional repressor NrdR (147 aa).

A zinc finger spans residues 3–34 (CPFCGHEDTQVAETRESDEGDVIRRRRRCPSC). The 91-residue stretch at 49 to 139 (PAIVKKDGSR…VYRSFEGVDE (91 aa)) folds into the ATP-cone domain.

This sequence belongs to the NrdR family. Zn(2+) is required as a cofactor.

In terms of biological role, negatively regulates transcription of bacterial ribonucleotide reductase nrd genes and operons by binding to NrdR-boxes. This chain is Transcriptional repressor NrdR, found in Methylibium petroleiphilum (strain ATCC BAA-1232 / LMG 22953 / PM1).